The primary structure comprises 193 residues: ECF RNA polymerase sigma factor SigK (193 aa).

Residues 35–101 (LYDRTRSRVY…RRAVDRVRSE (67 aa)) are sigma-70 factor domain-2. The Polymerase core binding motif lies at 59 to 62 (ETTQ). The sigma-70 factor domain-4 stretch occupies residues 140-187 (MGSLSDLQREAIQLAYYEGLTYVQVSERLSANLATIKSRMRGGIRGLK). A DNA-binding region (H-T-H motif) is located at residues 161 to 180 (YVQVSERLSANLATIKSRMR).

It belongs to the sigma-70 factor family. ECF subfamily. Interacts transiently with the RNA polymerase catalytic core formed by RpoA, RpoB, RpoC and RpoZ (2 alpha, 1 beta, 1 beta' and 1 omega subunit) to form the RNA polymerase holoenzyme that can initiate transcription. Interacts (via sigma-70 factor domain 4) with anti-sigma-K factor RskA.

Its function is as follows. Sigma factors are initiation factors that promote the attachment of RNA polymerase to specific initiation sites and are then released. Extracytoplasmic function (ECF) sigma factors are held in an inactive form by an anti-sigma factor until released by regulated intramembrane proteolysis. The sequence is that of ECF RNA polymerase sigma factor SigK (sigK) from Mycobacterium sp. (strain KMS).